A 453-amino-acid polypeptide reads, in one-letter code: Phosphoglucosamine mutase (453 aa).

Residue S102 is the Phosphoserine intermediate of the active site. Residues S102, D243, D245, and D247 each contribute to the Mg(2+) site. S102 carries the post-translational modification Phosphoserine.

This sequence belongs to the phosphohexose mutase family. The cofactor is Mg(2+). In terms of processing, activated by phosphorylation.

It catalyses the reaction alpha-D-glucosamine 1-phosphate = D-glucosamine 6-phosphate. Catalyzes the conversion of glucosamine-6-phosphate to glucosamine-1-phosphate. In Bartonella tribocorum (strain CIP 105476 / IBS 506), this protein is Phosphoglucosamine mutase.